Here is a 686-residue protein sequence, read N- to C-terminus: MANDPRKLLVTCALPYANGSIHLGHMLEHIQADIWVRYQRLRGNTVNFICADDAHGTPIMLKAQQMGITPEEMIAAVSEEHQKDFAGFDISFDNYHSTHSEENRELASHIYLELKKNGFISSRTISQLFDPEKEMFLPDRFVKGTCPKCKSEDQYGDNCDNCGETYSPTELIDPKSAVSGATPVMKDSEHFFFDLPQFESMLKEWTRSGSLQSETANKMQEWFESGLQQWDISRDAPYFGFEIPGEENKFFYVWLDAPVGYMASFKNLCDKTEGLDFDEYWKKDSSTELYHFIGKDIVYFHSLFWPAMLEGSGFRKPNNVFVHGYVTVNGAKMSKSKGTFVKASTYLKHLDPECLRYYYAAKLNSRIDDLDLNLEDFTQRVNADVVNKIVNLASRNAGFISKRFEGKLAENFAEPELYNEFVAAADRIAELYETREFGRAIREITALADKANQYVDEKAPWVVAKEEGKDQELQEICSVGINLFRVLMTYLKPVMPALAARTEAFLNQELTWEGIAAPLTGHEITKFKALFNRIDPKNIEAMIEASKEDAAAEMAAKEKAEAEKNKASQTELDKDPIAEEIEFDAFAAVDMRIARIISCEEVPKANKLLKFQLDIGGETRQVFSGIKSAYKPEELEGKLTVMVANLKPRKMKFGMSEGMILAAGPGGSDLWILEPHEGAQPGMRVM.

The short motif at 15 to 25 (PYANGSIHLGH) is the 'HIGH' region element. Residues Cys-146, Cys-149, Cys-159, and Cys-162 each contribute to the Zn(2+) site. A 'KMSKS' region motif is present at residues 332 to 336 (KMSKS). Residue Lys-335 participates in ATP binding. One can recognise a tRNA-binding domain in the interval 585-686 (AFAAVDMRIA…EGAQPGMRVM (102 aa)).

This sequence belongs to the class-I aminoacyl-tRNA synthetase family. MetG type 1 subfamily. As to quaternary structure, homodimer. The cofactor is Zn(2+).

The protein localises to the cytoplasm. It catalyses the reaction tRNA(Met) + L-methionine + ATP = L-methionyl-tRNA(Met) + AMP + diphosphate. Is required not only for elongation of protein synthesis but also for the initiation of all mRNA translation through initiator tRNA(fMet) aminoacylation. In Vibrio campbellii (strain ATCC BAA-1116), this protein is Methionine--tRNA ligase.